Here is a 494-residue protein sequence, read N- to C-terminus: UPF0371 protein M6_Spy1067 (494 aa).

The protein belongs to the UPF0371 family.

This chain is UPF0371 protein M6_Spy1067, found in Streptococcus pyogenes serotype M6 (strain ATCC BAA-946 / MGAS10394).